Reading from the N-terminus, the 314-residue chain is Porphobilinogen deaminase (314 aa).

Cys242 is subject to S-(dipyrrolylmethanemethyl)cysteine.

This sequence belongs to the HMBS family. Monomer. Dipyrromethane is required as a cofactor.

It catalyses the reaction 4 porphobilinogen + H2O = hydroxymethylbilane + 4 NH4(+). It participates in porphyrin-containing compound metabolism; protoporphyrin-IX biosynthesis; coproporphyrinogen-III from 5-aminolevulinate: step 2/4. Functionally, tetrapolymerization of the monopyrrole PBG into the hydroxymethylbilane pre-uroporphyrinogen in several discrete steps. This chain is Porphobilinogen deaminase (hemC), found in Bacillus subtilis (strain 168).